The following is a 259-amino-acid chain: Probable 6-phosphogluconolactonase 2 (259 aa).

The protein belongs to the glucosamine/galactosamine-6-phosphate isomerase family. 6-phosphogluconolactonase subfamily.

Its subcellular location is the cytoplasm. The protein resides in the cytosol. The catalysed reaction is 6-phospho-D-glucono-1,5-lactone + H2O = 6-phospho-D-gluconate + H(+). Its pathway is carbohydrate degradation; pentose phosphate pathway; D-ribulose 5-phosphate from D-glucose 6-phosphate (oxidative stage): step 2/3. Its function is as follows. Catalyzes the hydrolysis of 6-phosphogluconolactone to 6-phosphogluconate. The polypeptide is Probable 6-phosphogluconolactonase 2 (Arabidopsis thaliana (Mouse-ear cress)).